A 132-amino-acid chain; its full sequence is Small ribosomal subunit protein uS8 (132 aa).

Belongs to the universal ribosomal protein uS8 family. As to quaternary structure, part of the 30S ribosomal subunit. Contacts proteins S5 and S12.

In terms of biological role, one of the primary rRNA binding proteins, it binds directly to 16S rRNA central domain where it helps coordinate assembly of the platform of the 30S subunit. The sequence is that of Small ribosomal subunit protein uS8 from Rickettsia rickettsii (strain Sheila Smith).